The primary structure comprises 640 residues: Threonine--tRNA ligase (640 aa).

The region spanning 1 to 59 is the TGS domain; it reads MKIKVKLPDGKEKEYDRGITPAEIAKELGVKKAIGAVVNGELWDLKRPIENDCELRLVT. Residues 240–531 are catalytic; it reads DHRKLGPHLE…LIEHFAGAFP (292 aa). Zn(2+) is bound by residues C332, H383, and H508.

The protein belongs to the class-II aminoacyl-tRNA synthetase family. Homodimer. Zn(2+) serves as cofactor.

It localises to the cytoplasm. It carries out the reaction tRNA(Thr) + L-threonine + ATP = L-threonyl-tRNA(Thr) + AMP + diphosphate + H(+). Its function is as follows. Catalyzes the attachment of threonine to tRNA(Thr) in a two-step reaction: L-threonine is first activated by ATP to form Thr-AMP and then transferred to the acceptor end of tRNA(Thr). Also edits incorrectly charged L-seryl-tRNA(Thr). This Thermotoga petrophila (strain ATCC BAA-488 / DSM 13995 / JCM 10881 / RKU-1) protein is Threonine--tRNA ligase.